The primary structure comprises 40 residues: MKALYMVFVLWVLIGCFLRCKERMGSEEKQAQEDPGDQDL.

An N-terminal signal peptide occupies residues 1–20; the sequence is MKALYMVFVLWVLIGCFLRC.

The protein localises to the secreted. May play a role in protection or detoxification. This Mus musculus (Mouse) protein is Submaxillary gland androgen-regulated protein 2, isoform epsilon (Smr2).